We begin with the raw amino-acid sequence, 156 residues long: ATP synthase subunit b (156 aa).

The chain crosses the membrane as a helical span at residues 11–31 (LIAFVVFVIFCMKYVWPPIIG).

Belongs to the ATPase B chain family. As to quaternary structure, F-type ATPases have 2 components, F(1) - the catalytic core - and F(0) - the membrane proton channel. F(1) has five subunits: alpha(3), beta(3), gamma(1), delta(1), epsilon(1). F(0) has three main subunits: a(1), b(2) and c(10-14). The alpha and beta chains form an alternating ring which encloses part of the gamma chain. F(1) is attached to F(0) by a central stalk formed by the gamma and epsilon chains, while a peripheral stalk is formed by the delta and b chains.

It localises to the cell inner membrane. Functionally, f(1)F(0) ATP synthase produces ATP from ADP in the presence of a proton or sodium gradient. F-type ATPases consist of two structural domains, F(1) containing the extramembraneous catalytic core and F(0) containing the membrane proton channel, linked together by a central stalk and a peripheral stalk. During catalysis, ATP synthesis in the catalytic domain of F(1) is coupled via a rotary mechanism of the central stalk subunits to proton translocation. Component of the F(0) channel, it forms part of the peripheral stalk, linking F(1) to F(0). The polypeptide is ATP synthase subunit b (Colwellia psychrerythraea (strain 34H / ATCC BAA-681) (Vibrio psychroerythus)).